The primary structure comprises 161 residues: Protein-export protein SecB (161 aa).

This sequence belongs to the SecB family. As to quaternary structure, homotetramer, a dimer of dimers. One homotetramer interacts with 1 SecA dimer.

Its subcellular location is the cytoplasm. Its function is as follows. One of the proteins required for the normal export of preproteins out of the cell cytoplasm. It is a molecular chaperone that binds to a subset of precursor proteins, maintaining them in a translocation-competent state. It also specifically binds to its receptor SecA. In Rhodopseudomonas palustris (strain BisA53), this protein is Protein-export protein SecB.